Here is a 388-residue protein sequence, read N- to C-terminus: Mannosyl-3-phosphoglycerate synthase (388 aa).

This sequence belongs to the glycosyltransferase 2 family.

Its subcellular location is the cytoplasm. The enzyme catalyses (2R)-3-phosphoglycerate + GDP-alpha-D-mannose = 2-O-(alpha-D-mannosyl)-3-phosphoglycerate + GDP + H(+). Its pathway is carbohydrate biosynthesis; 2-(alpha-D-mannosyl)-D-glycerate biosynthesis; 2-(alpha-D-mannosyl)-D-glycerate from GDP-alpha-D-mannose (MPG route): step 1/2. Its function is as follows. Transfers a mannosyl group from GDP-mannose to phosphoglycerate to form mannosyl-3-phosphoglycerate (MPG). This is Mannosyl-3-phosphoglycerate synthase (mngA) from Aeropyrum pernix (strain ATCC 700893 / DSM 11879 / JCM 9820 / NBRC 100138 / K1).